We begin with the raw amino-acid sequence, 284 residues long: Distal membrane arm assembly component 2 (284 aa).

Belongs to the ATP synthase subunit s family. As to quaternary structure, associates with mitochondrial complex I assembly intermediates during its biogenesis.

Functionally, involved in the assembly of the mitochondrial membrane respiratory chain NADH dehydrogenase (Complex I). In Drosophila melanogaster (Fruit fly), this protein is Distal membrane arm assembly component 2.